Reading from the N-terminus, the 281-residue chain is MNTPEHSELGKSSAYVDQYDASLLFPIPRLAKRLEMGVGATPIFFGADLWTAFELSWLNLRGKPQVALAQFIVPCETPNIIESKSFKLYLNSFNNTRFPDAAEVQARLRADISEAAWRGAPQASTVGVKLLLPEMFDREDVAELDGLSLDRLDVECSRYTPAPDLLSAVFDEPPVSEVLTSNLLKSNCLVTGQPDWGSVRIAYSGPQINQEGLLQYIVSFRNHNEFHEQCVERIFMDLWTRCKPVKLTVYARYTRRGGLDINPFRTSHPQAIPPNIRMARQ.

81–83 (IES) lines the substrate pocket. 83–84 (SK) is an NADPH binding site. The Thioimide intermediate role is filled by cysteine 188. Residue aspartate 195 is the Proton donor of the active site. A substrate-binding site is contributed by 227–228 (HE). An NADPH-binding site is contributed by 256 to 257 (RG).

The protein belongs to the GTP cyclohydrolase I family. QueF type 2 subfamily. In terms of assembly, homodimer.

Its subcellular location is the cytoplasm. It catalyses the reaction 7-aminomethyl-7-carbaguanine + 2 NADP(+) = 7-cyano-7-deazaguanine + 2 NADPH + 3 H(+). The protein operates within tRNA modification; tRNA-queuosine biosynthesis. Its function is as follows. Catalyzes the NADPH-dependent reduction of 7-cyano-7-deazaguanine (preQ0) to 7-aminomethyl-7-deazaguanine (preQ1). The polypeptide is NADPH-dependent 7-cyano-7-deazaguanine reductase (Polaromonas naphthalenivorans (strain CJ2)).